The following is a 192-amino-acid chain: Ion-translocating oxidoreductase complex subunit B (192 aa).

The tract at residues 1-26 (MTAIWIAIAALSALALAFGLVLGYAS) is hydrophobic. Residues 32–91 (ENDPIVEEVEAMLPQSQCGQCGYPGCRPYAEAVSLNGESINKCGPGGEAMMLKLAEKLNV) enclose the 4Fe-4S domain. Residues Cys-49, Cys-52, Cys-57, Cys-74, Cys-117, Cys-120, Cys-123, Cys-127, Cys-147, Cys-150, Cys-153, and Cys-157 each contribute to the [4Fe-4S] cluster site. 4Fe-4S ferredoxin-type domains lie at 108–137 (HVAW…GSTK) and 138–167 (AVHT…LRPI).

It belongs to the 4Fe4S bacterial-type ferredoxin family. RnfB subfamily. As to quaternary structure, the complex is composed of six subunits: RnfA, RnfB, RnfC, RnfD, RnfE and RnfG. [4Fe-4S] cluster serves as cofactor.

It localises to the cell inner membrane. Part of a membrane-bound complex that couples electron transfer with translocation of ions across the membrane. This is Ion-translocating oxidoreductase complex subunit B from Pectobacterium atrosepticum (strain SCRI 1043 / ATCC BAA-672) (Erwinia carotovora subsp. atroseptica).